We begin with the raw amino-acid sequence, 1323 residues long: Receptor tyrosine-protein kinase let-23 (1323 aa).

An N-terminal signal peptide occupies residues 1–20; that stretch reads MRYPPSIGSILLIIPIFLTF. Topologically, residues 21–818 are extracellular; that stretch reads FGNSNAQLWK…DIASRQRKTR (798 aa). N-linked (GlcNAc...) asparagine glycans are attached at residues N91 and N169. Disulfide bonds link C220–C228, C224–C236, C244–C251, C248–C262, C263–C271, C267–C279, C282–C291, C295–C322, C326–C337, C341–C356, and C359–C364. N-linked (GlcNAc...) asparagine glycosylation occurs at N255. N376 is a glycosylation site (N-linked (GlcNAc...) asparagine). Intrachain disulfides connect C520-C529, C524-C537, C540-C549, C553-C567, C570-C577, C574-C585, C588-C604, C608-C620, C623-C632, C627-C644, C647-C660, C670-C693, C696-C703, C700-C715, C717-C731, C735-C750, C753-C763, C757-C771, C774-C787, and C791-C805. N-linked (GlcNAc...) asparagine glycosylation is present at N561. Residue N655 is glycosylated (N-linked (GlcNAc...) asparagine). N-linked (GlcNAc...) asparagine glycosylation occurs at N746. N-linked (GlcNAc...) asparagine glycosylation occurs at N776. Residues 819–839 form a helical membrane-spanning segment; sequence MVIIGSVLFGFAVMFLFILLV. Residues 840–1323 lie on the Cytoplasmic side of the membrane; it reads YWRCQRIGKK…EEVSQKETCL (484 aa). In terms of domain architecture, Protein kinase spans 885–1152; that stretch reads TKLDKKLGAG…EFCKVPQLFL (268 aa). Residues 891–899 and K919 each bind ATP; that span reads LGAGAFGTV. D1010 (proton acceptor) is an active-site residue. Over residues 1265–1289 the composition is skewed to polar residues; the sequence is GQTELSPSNGDYYNQPNTPSSSSGY. A disordered region spans residues 1265–1323; that stretch reads GQTELSPSNGDYYNQPNTPSSSSGYYNEPHLKTKKPETSEEAEAVQYENEEVSQKETCL. Residues 1293–1302 show a composition bias toward basic and acidic residues; sequence PHLKTKKPET. Residues 1303 to 1315 show a composition bias toward acidic residues; that stretch reads SEEAEAVQYENEE.

Belongs to the protein kinase superfamily. Tyr protein kinase family. EGF receptor subfamily. In terms of tissue distribution, expressed in vulval precursor cells (at protein level). Expressed in ALA neurons, 2 ventral head neurons, a single neuron in the tail, pharyngeal-intestinal valve and posterior arcade epithelial cells.

The protein localises to the apical cell membrane. It localises to the basolateral cell membrane. The enzyme catalyses L-tyrosyl-[protein] + ATP = O-phospho-L-tyrosyl-[protein] + ADP + H(+). In terms of biological role, tyrosine-protein kinase receptor which, upon binding ligand lin-3, activates 2 signaling cascades: the let-60/Ras and MAP kinase signaling pathway and the let-60-independent phospholipase C-mediated Ca(2+) signaling pathway. Each pathway regulates distinct functions. By activating let-60/Ras, regulates larval development, induction of vulva cell precursors during vulva development, male spicule formation and posterior development of the epidermis. Probably by activating phospholipase plc-3 and inositol 1,4,5-trisphosphate receptor itr-1 signaling cascade downstream of ligand lin-3, plays a role in ovulation by promoting ovulatory gonadal sheath cell contractions. Probably by regulating neuronal transmission in ALA neurons, mediates, independently of let-60/Ras, the decrease in pharyngeal pumping and locomotion during the quiescent state that precedes each larval molt, downstream of lin-3 and upstream of plc-3. The sequence is that of Receptor tyrosine-protein kinase let-23 from Caenorhabditis elegans.